The sequence spans 150 residues: SsrA-binding protein (150 aa).

Residues 129 to 150 (KRQTLKSKEADREMARALRDRH) form a disordered region.

Belongs to the SmpB family.

The protein resides in the cytoplasm. Its function is as follows. Required for rescue of stalled ribosomes mediated by trans-translation. Binds to transfer-messenger RNA (tmRNA), required for stable association of tmRNA with ribosomes. tmRNA and SmpB together mimic tRNA shape, replacing the anticodon stem-loop with SmpB. tmRNA is encoded by the ssrA gene; the 2 termini fold to resemble tRNA(Ala) and it encodes a 'tag peptide', a short internal open reading frame. During trans-translation Ala-aminoacylated tmRNA acts like a tRNA, entering the A-site of stalled ribosomes, displacing the stalled mRNA. The ribosome then switches to translate the ORF on the tmRNA; the nascent peptide is terminated with the 'tag peptide' encoded by the tmRNA and targeted for degradation. The ribosome is freed to recommence translation, which seems to be the essential function of trans-translation. The sequence is that of SsrA-binding protein from Syntrophotalea carbinolica (strain DSM 2380 / NBRC 103641 / GraBd1) (Pelobacter carbinolicus).